Here is a 190-residue protein sequence, read N- to C-terminus: Xanthine phosphoribosyltransferase (190 aa).

Xanthine contacts are provided by Leu-20 and Asn-27. Residue Ala-129–Ala-133 participates in 5-phospho-alpha-D-ribose 1-diphosphate binding. Lys-157 lines the xanthine pocket.

It belongs to the purine/pyrimidine phosphoribosyltransferase family. Xpt subfamily. Homodimer.

The protein localises to the cytoplasm. The catalysed reaction is XMP + diphosphate = xanthine + 5-phospho-alpha-D-ribose 1-diphosphate. It functions in the pathway purine metabolism; XMP biosynthesis via salvage pathway; XMP from xanthine: step 1/1. Functionally, converts the preformed base xanthine, a product of nucleic acid breakdown, to xanthosine 5'-monophosphate (XMP), so it can be reused for RNA or DNA synthesis. This chain is Xanthine phosphoribosyltransferase, found in Clostridium tetani (strain Massachusetts / E88).